The chain runs to 188 residues: Peptide deformylase (188 aa).

Residues alanine 70–glutamate 90 form a disordered region. Positions 113 and 155 each coordinate Fe cation. Residue glutamate 156 is part of the active site. Histidine 159 serves as a coordination point for Fe cation.

Belongs to the polypeptide deformylase family. The cofactor is Fe(2+).

It catalyses the reaction N-terminal N-formyl-L-methionyl-[peptide] + H2O = N-terminal L-methionyl-[peptide] + formate. In terms of biological role, removes the formyl group from the N-terminal Met of newly synthesized proteins. Requires at least a dipeptide for an efficient rate of reaction. N-terminal L-methionine is a prerequisite for activity but the enzyme has broad specificity at other positions. This Novosphingobium aromaticivorans (strain ATCC 700278 / DSM 12444 / CCUG 56034 / CIP 105152 / NBRC 16084 / F199) protein is Peptide deformylase.